The chain runs to 340 residues: Lipopolysaccharide heptosyltransferase 3 (340 aa).

This sequence belongs to the glycosyltransferase 9 family.

It carries out the reaction an L-alpha-D-Hep-(1-&gt;3)-4-O-phospho-L-alpha-D-Hep-(1-&gt;5)-[alpha-Kdo-(2-&gt;4)]-alpha-Kdo-(2-&gt;6)-lipid A + ADP-L-glycero-beta-D-manno-heptose = an L-alpha-D-Hep-(1-&gt;7)-L-alpha-D-Hep-(1-&gt;3)-4-O-phospho-L-alpha-D-Hep-(1-&gt;5)-[alpha-Kdo-(2-&gt;4)]-alpha-Kdo-(2-&gt;6)-lipid A + ADP + H(+). The enzyme catalyses L-alpha-D-Hep-(1-&gt;3)-4-O-phospho-L-alpha-D-Hep-(1-&gt;5)-[alpha-Kdo-(2-&gt;4)]-alpha-Kdo-(2-&gt;6)-lipid A (E. coli) + ADP-L-glycero-beta-D-manno-heptose = L-alpha-D-Hep-(1-&gt;7)-L-alpha-D-Hep-(1-&gt;3)-4-O-phospho-L-alpha-D-Hep-(1-&gt;5)-[alpha-Kdo-(2-&gt;4)]-alpha-Kdo-(2-&gt;6)-lipid A (E. coli) + ADP + H(+). It functions in the pathway bacterial outer membrane biogenesis; LPS core biosynthesis. Its function is as follows. Glycosyltransferase involved in the biosynthesis of the core oligosaccharide region of lipopolysaccharide (LPS). Catalyzes the addition of the third heptose unit (HepIII) to the second heptose unit (HepII) of the phospho-Hep2-Kdo2-lipid A module. The transfer of HepIII seems to be a prerequisite to the phosphorylation of the second heptose unit. This Escherichia coli protein is Lipopolysaccharide heptosyltransferase 3.